The following is a 273-amino-acid chain: SPRY domain-containing SOCS box protein 4 (273 aa).

The 200-residue stretch at 34–233 (PARLDQLLDM…MRYINGLDPE (200 aa)) folds into the B30.2/SPRY domain. The SOCS box domain occupies 234–273 (PLPLMDLCRRSIRSALGRQRLRDIGSLPLPQSLKNYLQYQ).

Belongs to the SPSB family. Component of the probable ECS(SPSB4) E3 ubiquitin-protein ligase complex which contains CUL5, RNF7/RBX2, Elongin BC complex and SPSB4. Interacts with CUL5; RNF7; ELOB and ELOC. Interacts with MET. Interacts (via B30.2/SPRY domain) with PAWR; this interaction occurs in association with the Elongin BC complex. Interacts with NOS2. Interacts with EPHB2.

It localises to the cytoplasm. The protein resides in the cytosol. It participates in protein modification; protein ubiquitination. Its function is as follows. Substrate recognition component of a SCF-like ECS (Elongin BC-CUL2/5-SOCS-box protein) E3 ubiquitin-protein ligase complex which mediates the ubiquitination and subsequent proteasomal degradation of target proteins. Negatively regulates nitric oxide (NO) production and limits cellular toxicity in activated macrophages by mediating the ubiquitination and proteasomal degradation of NOS2. Acts as a bridge which links NOS2 with the ECS E3 ubiquitin ligase complex components ELOC and CUL5. Diminishes EphB2-dependent cell repulsive responses by mediating the ubiquitination and degradation of the EphB2/CTF2. Regulates cellular clock function by mediating ubiquitination and proteasomal degradation of the circadian transcriptional repressor NR1D1. This Mus musculus (Mouse) protein is SPRY domain-containing SOCS box protein 4 (Spsb4).